Here is a 753-residue protein sequence, read N- to C-terminus: RNA-directed RNA polymerase catalytic subunit (753 aa).

The disordered stretch occupies residues 52–82; the sequence is KGKWTTNTETGAPQLNPIDGPLPEDNEPSGY. Over residues 55 to 64 the composition is skewed to polar residues; that stretch reads WTTNTETGAP. Short sequence motifs (nuclear localization signal) lie at residues 187–195 and 203–216; these read RKRRVRDNM and RTIG…NKKS. The tract at residues 249–256 is promoter-binding site; sequence RGFVYFVE. Positions 286-483 constitute a RdRp catalytic domain; sequence VRKMMTNSQD…GINMSKKKSY (198 aa).

The protein belongs to the influenza viruses polymerase PB1 family. As to quaternary structure, influenza RNA polymerase is composed of three subunits: PB1, PB2 and PA. Interacts (via N-terminus) with PA (via C-terminus). Interacts (via C-terminus) with PB2 (via N-terminus); this interaction is essential for transcription initiation. Phosphorylated by host PRKCA.

The protein resides in the host nucleus. It is found in the host cytoplasm. It catalyses the reaction RNA(n) + a ribonucleoside 5'-triphosphate = RNA(n+1) + diphosphate. Functionally, RNA-dependent RNA polymerase which is responsible for replication and transcription of virus RNA segments. The transcription of viral mRNAs occurs by a unique mechanism called cap-snatching. 5' methylated caps of cellular mRNAs are cleaved after 10-13 nucleotides by PA. In turn, these short capped RNAs are used as primers by PB1 for transcription of viral mRNAs. During virus replication, PB1 initiates RNA synthesis and copy vRNA into complementary RNA (cRNA) which in turn serves as a template for the production of more vRNAs. The chain is RNA-directed RNA polymerase catalytic subunit from Influenza A virus (strain A/Chicken/Hong Kong/96.1/2002 H5N1 genotype Y).